The following is a 180-amino-acid chain: Nucleoside-triphosphatase THEP1 (180 aa).

ATP is bound by residues 8 to 15 (GPVGSIKA) and 100 to 107 (VIIIDELG).

It belongs to the THEP1 NTPase family.

It catalyses the reaction a ribonucleoside 5'-triphosphate + H2O = a ribonucleoside 5'-diphosphate + phosphate + H(+). Functionally, has nucleotide phosphatase activity towards ATP, GTP, CTP, TTP and UTP. May hydrolyze nucleoside diphosphates with lower efficiency. The protein is Nucleoside-triphosphatase THEP1 of Picrophilus torridus (strain ATCC 700027 / DSM 9790 / JCM 10055 / NBRC 100828 / KAW 2/3).